Consider the following 1177-residue polypeptide: DNA-directed RNA polymerase subunit beta (1177 aa).

The segment covering 1147–1161 (DDTEIEMRDTEDDDD) has biased composition (acidic residues). A disordered region spans residues 1147–1177 (DDTEIEMRDTEDDDDHQSADKLNVEVETTKE). Residues 1162-1177 (HQSADKLNVEVETTKE) are compositionally biased toward basic and acidic residues.

Belongs to the RNA polymerase beta chain family. In terms of assembly, the RNAP catalytic core consists of 2 alpha, 1 beta, 1 beta' and 1 omega subunit. When a sigma factor is associated with the core the holoenzyme is formed, which can initiate transcription.

It carries out the reaction RNA(n) + a ribonucleoside 5'-triphosphate = RNA(n+1) + diphosphate. Functionally, DNA-dependent RNA polymerase catalyzes the transcription of DNA into RNA using the four ribonucleoside triphosphates as substrates. The sequence is that of DNA-directed RNA polymerase subunit beta from Bacillus anthracis (strain A0248).